Consider the following 101-residue polypeptide: Small ribosomal subunit protein uS14 (101 aa).

This sequence belongs to the universal ribosomal protein uS14 family. As to quaternary structure, part of the 30S ribosomal subunit. Contacts proteins S3 and S10.

Binds 16S rRNA, required for the assembly of 30S particles and may also be responsible for determining the conformation of the 16S rRNA at the A site. The protein is Small ribosomal subunit protein uS14 of Marinobacter nauticus (strain ATCC 700491 / DSM 11845 / VT8) (Marinobacter aquaeolei).